The primary structure comprises 223 residues: Glycoprotein 42 (223 aa).

The Intravirion portion of the chain corresponds to 1 to 8; that stretch reads MVSFKQVR. A helical membrane pass occupies residues 9–29; sequence VPLFTAIALVIVLLLAYFLPP. At 30-223 the chain is on the virion surface side; the sequence is RVRGGGRVAA…CLCVSQRSNS (194 aa). Disulfide bonds link C99-C138, C102-C115, C128-C214, C132-C216, and C192-C208. In terms of domain architecture, C-type lectin spans 111 to 217; it reads YKGCCFYFTK…CSFLKPCLCV (107 aa).

Belongs to the epstein barr virus gp42 family. Forms a complex with gp25 and gp85 via its N-terminus; this complex is used for invasion of B-lymphocytes. Interacts with human HLA-DRA and HLA-DRB1.

The protein resides in the virion membrane. It is found in the host membrane. In terms of biological role, plays a role in virion attachment to host B-lymphocytes, through binding to leukocyte antigen (HLA) class II and subsequently participates in fusion of the virion with host membranes. May act as a tropism switch that directs fusion with B-lymphocytes and inhibits fusion with epithelial cells. Additionally, hampers T-cell recognition via HLA class II molecules through steric hindrance of T-cell receptor-class II-peptide interaction. Soluble gp42 inhibits HLA class II-restricted antigen presentation to T-cells through binding to immature and mature HLA class II complexes. This is Glycoprotein 42 from Epstein-Barr virus (strain B95-8) (HHV-4).